We begin with the raw amino-acid sequence, 572 residues long: Nucleolin 1 (572 aa).

Disordered stretches follow at residues 1–312 (MGKA…ESAT) and 488–572 (DEAK…FGDE). Positions 7–21 (KSVAVAVAPAAVPAK) are enriched in low complexity. Positions 27 to 38 (KREAEDEIEKAV) are enriched in basic and acidic residues. 2 stretches are compositionally biased toward low complexity: residues 45 to 58 (AAAA…PAPK) and 72 to 81 (KAASSSSGSS). Acidic residues-rich tracts occupy residues 82–91 (SEEDSSESEE), 109–122 (SSDE…DDED), 144–156 (SESD…DEDE), 177–191 (DSSE…SDED), 208–222 (STDG…EDED), 235–247 (SDEE…ESSD), and 261–276 (ESSE…EEDE). The span at 300–311 (PASNQSQGTESA) shows a compositional bias: polar residues. RRM domains lie at 311–387 (ATLF…LAHE) and 411–492 (QSIF…EAKP). Basic and acidic residues-rich tracts occupy residues 488-520 (DEAK…DRFG) and 528-545 (GGRD…DGGR). Residues 553-566 (QSRQSAGTASTGKK) are compositionally biased toward polar residues.

The protein localises to the nucleus. It is found in the nucleolus. Functionally, involved in pre-rRNA processing and ribosome assembly. This Oryza sativa subsp. japonica (Rice) protein is Nucleolin 1.